We begin with the raw amino-acid sequence, 534 residues long: MKIAVEGCCHGELDKIYETIQFLEKKENTKVDLLLCCGDFQAVRNEGDMKCMAVPMKYRQMQTFYKYYSGEKKAPILTIFIGGNHEASNYLQELPYGGWVAPNIYYMGYAGVVKYRGVRIGGISGIFKSHDYRKGHFERPPYSKDTVRSAYHVRSIEVFKLKQLKEPMDIFLSHDWPRSIYHYGNKKQLLKKKDFFRQEVEDNTLGSPAASELLLHIQPSYWFSAHLHVKFAAFMQHQNNVGEIPKATKFLALDKCLPHREFLQIVDMEHDPSKPECLEYDLEWLAVLKATKDLLNITSKTWNMPENNGLHARWDFSMSEETKREVLDDLGHDIKIPCNFSVTTACYDPNNPQYKRMPTHIVNPQTTEFCARLGLVDLNVKVRQHEEEKEDFDMTEDNEADSIGSAEDPGEYSTDTSILSTSVNPDEITLEDDDEQEDEGIAEKLGEPSPEYTPDLSVNFSNIRVLPDSMAVSSDDATDSTNDELDRSESSQTEGEGKQSNRPLKRMSNENGSGGVKIKRRNQAIYQAKDDEDE.

A divalent metal cation contacts are provided by C8, H10, D39, and N84. Residues 124-154 form a lariat recognition loop region; that stretch reads SGIFKSHDYRKGHFERPPYSKDTVRSAYHVR. H174, H226, and H228 together coordinate a divalent metal cation. Disordered regions lie at residues 386 to 439 and 469 to 534; these read EEEK…QEDE and SMAV…DEDE. The segment covering 388–400 has biased composition (acidic residues); that stretch reads EKEDFDMTEDNEA. A compositionally biased stretch (polar residues) spans 413 to 424; sequence STDTSILSTSVN. The segment covering 428-439 has biased composition (acidic residues); it reads ITLEDDDEQEDE. Basic and acidic residues predominate over residues 484–499; sequence ELDRSESSQTEGEGKQ.

The protein belongs to the lariat debranching enzyme family. Requires Fe(2+) as cofactor. Zn(2+) serves as cofactor. It depends on Mn(2+) as a cofactor.

The protein localises to the nucleus. Active in presence of diverse metals including Fe(2+), Zn(2+), Mn(2+). Also activated by Ca(2+). Binds two metal cations in two adjacent alpha and beta metal-binding pockets. Its function is as follows. Cleaves the 2'-5' phosphodiester linkage at the branch point of excised lariat intron RNA and converts them into linear molecules that can be subsequently degraded, thereby facilitating ribonucleotide turnover. Linked to its role in pre-mRNA processing mechanism, may also participate in retrovirus replication and have an antiviral cell-intrinsic defense function. The polypeptide is Lariat debranching enzyme A (dbr1-a) (Xenopus laevis (African clawed frog)).